The primary structure comprises 354 residues: Protein OVEREXPRESSOR OF CATIONIC PEROXIDASE 3 (354 aa).

The Nuclear localization signal 1 signature appears at 63–70; sequence NRKGFVSS. Disordered stretches follow at residues 65 to 98 and 151 to 186; these read KGFV…EDPF and TGDV…PTKL. Acidic residues predominate over residues 154 to 181; it reads VDVDVDNDDDDNDDDDNDDDDDDSEEDE. A Nuclear localization signal 2 motif is present at residues 191-198; the sequence is LKRLAYAL. The segment at 243–264 is disordered; the sequence is KPPVAAPENSSPDPSPVESLSA. Positions 286 to 345 form a DNA-binding region, homeobox; it reads RWSAQKRVKKAHIETLEKVYRRSKRPTNAVVSSIVQVTNLPRKRVLKWFEDKRAEDGVPD. Residues 293-300 carry the Nuclear localization signal 3 motif; the sequence is VKKAHIET.

It is found in the nucleus. In terms of biological role, may modulate chromatin structure by regulation of nucleosome assembly/disassembly. Homeodomain transcription factor that mediates jasmonic acid (JA)-mediated COI1-dependent and abscisic acid (ABA)-mediated PMR4-dependent resistance to infection by necrotrophic fungal pathogens (e.g. B.cinerea and P.cucumerina) and bacterial pathogens (e.g. P.syringae DC3000); this resistance involves at least callose deposition. Required for the P.fluorescens WCS417r-triggered JA-dependent induced systemic resistance (ISR) against both P.syringae DC3000 and H.arabidopsidis. Negative regulator of the ABA-dependent drought resistance. The protein is Protein OVEREXPRESSOR OF CATIONIC PEROXIDASE 3 of Arabidopsis thaliana (Mouse-ear cress).